Reading from the N-terminus, the 337-residue chain is GTPase Obg (337 aa).

Positions methionine 1 to leucine 158 constitute an Obg domain. Composition is skewed to basic and acidic residues over residues asparagine 61–glycine 74 and proline 137–glycine 146. Disordered regions lie at residues asparagine 61–arginine 83 and glycine 119–glycine 146. Residues alanine 159–leucine 330 enclose the OBG-type G domain. Residues glycine 165–serine 172, phenylalanine 190–glutamate 194, aspartate 212–glycine 215, threonine 282–aspartate 285, and serine 311–alanine 313 contribute to the GTP site. Positions 172 and 192 each coordinate Mg(2+).

This sequence belongs to the TRAFAC class OBG-HflX-like GTPase superfamily. OBG GTPase family. Monomer. The cofactor is Mg(2+).

Its subcellular location is the cytoplasm. An essential GTPase which binds GTP, GDP and possibly (p)ppGpp with moderate affinity, with high nucleotide exchange rates and a fairly low GTP hydrolysis rate. Plays a role in control of the cell cycle, stress response, ribosome biogenesis and in those bacteria that undergo differentiation, in morphogenesis control. The sequence is that of GTPase Obg from Solibacter usitatus (strain Ellin6076).